A 373-amino-acid chain; its full sequence is Peptide chain release factor 1-like, mitochondrial (373 aa).

A mitochondrion-targeting transit peptide spans Met1–Ser25. Residues Gln56–Leu110 adopt a coiled-coil conformation. The interval Pro229–Leu293 is GGQ domain. The GGQ signature appears at Gly243–Gln245. The residue at position 245 (Gln245) is an N5-methylglutamine.

Belongs to the prokaryotic/mitochondrial release factor family. Post-translationally, methylation of glutamine in the GGQ triplet by HEMK1 is conserved from bacteria to mammals.

It is found in the mitochondrion. Its function is as follows. Mitochondrial peptide chain release factor that directs the termination of translation in response to the peptide chain termination codons UAA and UAG. This chain is Peptide chain release factor 1-like, mitochondrial (Mtrf1l), found in Mus musculus (Mouse).